The primary structure comprises 460 residues: tRNA(Ile)-lysidine synthase (460 aa).

30-35 (SGGLDS) lines the ATP pocket.

The protein belongs to the tRNA(Ile)-lysidine synthase family.

It is found in the cytoplasm. It catalyses the reaction cytidine(34) in tRNA(Ile2) + L-lysine + ATP = lysidine(34) in tRNA(Ile2) + AMP + diphosphate + H(+). Its function is as follows. Ligates lysine onto the cytidine present at position 34 of the AUA codon-specific tRNA(Ile) that contains the anticodon CAU, in an ATP-dependent manner. Cytidine is converted to lysidine, thus changing the amino acid specificity of the tRNA from methionine to isoleucine. This chain is tRNA(Ile)-lysidine synthase, found in Yersinia pestis.